We begin with the raw amino-acid sequence, 427 residues long: Glutamate-1-semialdehyde 2,1-aminomutase (427 aa).

Lysine 269 bears the N6-(pyridoxal phosphate)lysine mark.

It belongs to the class-III pyridoxal-phosphate-dependent aminotransferase family. HemL subfamily. Homodimer. Pyridoxal 5'-phosphate serves as cofactor.

It localises to the cytoplasm. It catalyses the reaction (S)-4-amino-5-oxopentanoate = 5-aminolevulinate. Its pathway is porphyrin-containing compound metabolism; protoporphyrin-IX biosynthesis; 5-aminolevulinate from L-glutamyl-tRNA(Glu): step 2/2. The polypeptide is Glutamate-1-semialdehyde 2,1-aminomutase (Thermus thermophilus (strain ATCC BAA-163 / DSM 7039 / HB27)).